We begin with the raw amino-acid sequence, 316 residues long: Rhomboid-related protein 4 (316 aa).

Topologically, residues 1 to 21 are cytoplasmic; that stretch reads MQRRTRGIDTGLLLLLSQVFH. The chain crosses the membrane as a helical span at residues 22 to 42; sequence IGINNIPPVTLATLAVNVWFF. At 43 to 103 the chain is on the extracellular side; that stretch reads LNPWKPLYHS…KLEKRLGSRW (61 aa). A helical transmembrane segment spans residues 104 to 124; sequence FAYIIATFSLLTGVVYLLLQF. At 125-137 the chain is on the cytoplasmic side; it reads ASAELMNQPDFKR. The chain crosses the membrane as a helical span at residues 138 to 154; the sequence is NCAVGFSGVLFALKVLS. S144 functions as the Nucleophile in the catalytic mechanism. The Extracellular segment spans residues 155 to 182; it reads NHYCPGGFVNILGFPVPNRFACWAELAA. The chain crosses the membrane as a helical span at residues 183–203; it reads IHFCTPGTSFAGHLAGILVGL. Residue H195 is part of the active site. Residues 204 to 316 lie on the Cytoplasmic side of the membrane; sequence MYTQGPLKKI…RQRLHRFDGQ (113 aa). A ubiquitin-binding domain (UBD) region spans residues 269–284; it reads SEEEQLERALRASIWD. The interval 301-316 is VCP/p97-interacting motif (VIM); it reads PEEEMRRQRLHRFDGQ.

This sequence belongs to the peptidase S54 family. Interacts with BIK and STEAP3. Interacts (via C-terminal domain) with VCP. Interacts with ubiquitin and ubiquitinated proteins. Expressed in intestine, lung, brain, kidney, epididymis and testis.

It localises to the endoplasmic reticulum membrane. The protein resides in the mitochondrion membrane. The enzyme catalyses Cleaves type-1 transmembrane domains using a catalytic dyad composed of serine and histidine that are contributed by different transmembrane domains.. With respect to regulation, inhibited by aprotinin. In terms of biological role, intramembrane-cleaving serine protease that cleaves single transmembrane or multi-pass membrane proteins in the hydrophobic plane of the membrane, luminal loops and juxtamembrane regions. Involved in regulated intramembrane proteolysis and the subsequent release of functional polypeptides from their membrane anchors. Functional component of endoplasmic reticulum-associated degradation (ERAD) for misfolded membrane proteins. Required for the degradation process of some specific misfolded endoplasmic reticulum (ER) luminal proteins. Participates in the transfer of misfolded proteins from the ER to the cytosol, where they are destroyed by the proteasome in a ubiquitin-dependent manner. Functions in BIK, MPZ, PKD1, PTCRA, RHO, STEAP3 and TRAC processing. Involved in the regulation of exosomal secretion; inhibits the TSAP6-mediated secretion pathway. Involved in the regulation of apoptosis; modulates BIK-mediated apoptotic activity. Also plays a role in the regulation of spermatogenesis; inhibits apoptotic activity in spermatogonia. The polypeptide is Rhomboid-related protein 4 (Rhbdd1) (Rattus norvegicus (Rat)).